A 190-amino-acid chain; its full sequence is Bifunctional protein PyrR (190 aa).

The short motif at 107–119 is the PRPP-binding element; that stretch reads IILVDDVLYSGRT.

This sequence belongs to the purine/pyrimidine phosphoribosyltransferase family. PyrR subfamily.

The enzyme catalyses UMP + diphosphate = 5-phospho-alpha-D-ribose 1-diphosphate + uracil. In terms of biological role, regulates the transcription of the pyrimidine nucleotide (pyr) operon in response to exogenous pyrimidines. Also displays a weak uracil phosphoribosyltransferase activity which is not physiologically significant. In Corynebacterium diphtheriae (strain ATCC 700971 / NCTC 13129 / Biotype gravis), this protein is Bifunctional protein PyrR.